We begin with the raw amino-acid sequence, 93 residues long: Large ribosomal subunit protein bL31 (93 aa).

The disordered stretch occupies residues 68 to 93 (GSADAAADEKKPDAKNNNKDNTSKED). Residues 74–93 (ADEKKPDAKNNNKDNTSKED) show a composition bias toward basic and acidic residues.

Belongs to the bacterial ribosomal protein bL31 family. Type A subfamily. Part of the 50S ribosomal subunit.

In terms of biological role, binds the 23S rRNA. The polypeptide is Large ribosomal subunit protein bL31 (Prochlorococcus marinus (strain MIT 9313)).